The chain runs to 231 residues: Large ribosomal subunit protein uL1 (231 aa).

Belongs to the universal ribosomal protein uL1 family. In terms of assembly, part of the 50S ribosomal subunit.

Functionally, binds directly to 23S rRNA. The L1 stalk is quite mobile in the ribosome, and is involved in E site tRNA release. Protein L1 is also a translational repressor protein, it controls the translation of the L11 operon by binding to its mRNA. The chain is Large ribosomal subunit protein uL1 from Francisella tularensis subsp. tularensis (strain WY96-3418).